The following is a 418-amino-acid chain: Queuine tRNA-ribosyltransferase accessory subunit 2 (418 aa).

Residues Cys-325, Cys-327, Cys-330, and His-356 each contribute to the Zn(2+) site.

It belongs to the queuine tRNA-ribosyltransferase family. QTRT2 subfamily. Heterodimer of a catalytic subunit and an accessory subunit. The cofactor is Zn(2+).

Its subcellular location is the cytoplasm. In terms of biological role, non-catalytic subunit of the queuine tRNA-ribosyltransferase (TGT) that catalyzes the base-exchange of a guanine (G) residue with queuine (Q) at position 34 (anticodon wobble position) in tRNAs with GU(N) anticodons (tRNA-Asp, -Asn, -His and -Tyr), resulting in the hypermodified nucleoside queuosine (7-(((4,5-cis-dihydroxy-2-cyclopenten-1-yl)amino)methyl)-7-deazaguanosine). The polypeptide is Queuine tRNA-ribosyltransferase accessory subunit 2 (Drosophila erecta (Fruit fly)).